A 363-amino-acid chain; its full sequence is Galactokinase (363 aa).

A substrate-binding site is contributed by 16 to 19 (EHTD). ATP-binding positions include Ser50 and 103–109 (GSGLSSS). Mg(2+)-binding residues include Ser109 and Glu141. The active-site Proton acceptor is the Asp153. Tyr205 contributes to the substrate binding site.

The protein belongs to the GHMP kinase family. GalK subfamily.

It is found in the cytoplasm. The enzyme catalyses alpha-D-galactose + ATP = alpha-D-galactose 1-phosphate + ADP + H(+). It participates in carbohydrate metabolism; galactose metabolism. Its function is as follows. Catalyzes the transfer of the gamma-phosphate of ATP to D-galactose to form alpha-D-galactose-1-phosphate (Gal-1-P). This is Galactokinase from Mycobacterium bovis (strain ATCC BAA-935 / AF2122/97).